Here is a 227-residue protein sequence, read N- to C-terminus: Cytochrome c oxidase subunit 2 (227 aa).

The Mitochondrial intermembrane portion of the chain corresponds to 1–14; that stretch reads MALPFQLGFQDATS. A helical membrane pass occupies residues 15 to 45; sequence PIMEELLHFHDHTLMIVFMISSLVLYLISSM. The Mitochondrial matrix portion of the chain corresponds to 46–59; sequence LTTRLTHTSTMDAQ. The chain crosses the membrane as a helical span at residues 60 to 87; it reads EVETIWTILPAIILITIALPSLRILYMM. The Mitochondrial intermembrane segment spans residues 88-227; it reads DEINNPSMTI…CFEKWSTSML (140 aa). Residues H161, C196, E198, C200, H204, and M207 each coordinate Cu cation. Residue E198 participates in Mg(2+) binding.

This sequence belongs to the cytochrome c oxidase subunit 2 family. In terms of assembly, component of the cytochrome c oxidase (complex IV, CIV), a multisubunit enzyme composed of 14 subunits. The complex is composed of a catalytic core of 3 subunits MT-CO1, MT-CO2 and MT-CO3, encoded in the mitochondrial DNA, and 11 supernumerary subunits COX4I, COX5A, COX5B, COX6A, COX6B, COX6C, COX7A, COX7B, COX7C, COX8 and NDUFA4, which are encoded in the nuclear genome. The complex exists as a monomer or a dimer and forms supercomplexes (SCs) in the inner mitochondrial membrane with NADH-ubiquinone oxidoreductase (complex I, CI) and ubiquinol-cytochrome c oxidoreductase (cytochrome b-c1 complex, complex III, CIII), resulting in different assemblies (supercomplex SCI(1)III(2)IV(1) and megacomplex MCI(2)III(2)IV(2)). Found in a complex with TMEM177, COA6, COX18, COX20, SCO1 and SCO2. Interacts with TMEM177 in a COX20-dependent manner. Interacts with COX20. Interacts with COX16. Requires Cu cation as cofactor.

The protein resides in the mitochondrion inner membrane. It carries out the reaction 4 Fe(II)-[cytochrome c] + O2 + 8 H(+)(in) = 4 Fe(III)-[cytochrome c] + 2 H2O + 4 H(+)(out). Its function is as follows. Component of the cytochrome c oxidase, the last enzyme in the mitochondrial electron transport chain which drives oxidative phosphorylation. The respiratory chain contains 3 multisubunit complexes succinate dehydrogenase (complex II, CII), ubiquinol-cytochrome c oxidoreductase (cytochrome b-c1 complex, complex III, CIII) and cytochrome c oxidase (complex IV, CIV), that cooperate to transfer electrons derived from NADH and succinate to molecular oxygen, creating an electrochemical gradient over the inner membrane that drives transmembrane transport and the ATP synthase. Cytochrome c oxidase is the component of the respiratory chain that catalyzes the reduction of oxygen to water. Electrons originating from reduced cytochrome c in the intermembrane space (IMS) are transferred via the dinuclear copper A center (CU(A)) of subunit 2 and heme A of subunit 1 to the active site in subunit 1, a binuclear center (BNC) formed by heme A3 and copper B (CU(B)). The BNC reduces molecular oxygen to 2 water molecules using 4 electrons from cytochrome c in the IMS and 4 protons from the mitochondrial matrix. The sequence is that of Cytochrome c oxidase subunit 2 (MT-CO2) from Phyllostomus hastatus (Greater spear-nosed bat).